The sequence spans 194 residues: Probable chorismate pyruvate-lyase (194 aa).

R77, L115, and E176 together coordinate substrate.

Belongs to the UbiC family.

Its subcellular location is the cytoplasm. It catalyses the reaction chorismate = 4-hydroxybenzoate + pyruvate. Its pathway is cofactor biosynthesis; ubiquinone biosynthesis. Removes the pyruvyl group from chorismate, with concomitant aromatization of the ring, to provide 4-hydroxybenzoate (4HB) for the ubiquinone pathway. The sequence is that of Probable chorismate pyruvate-lyase from Cupriavidus pinatubonensis (strain JMP 134 / LMG 1197) (Cupriavidus necator (strain JMP 134)).